We begin with the raw amino-acid sequence, 414 residues long: Procollagen C-endopeptidase enhancer 2 (414 aa).

The N-terminal stretch at 1-22 (MGGASACIPLCLLLATARMARP) is a signal peptide. Intrachain disulfides connect C32-C58, C85-C106, C153-C180, C207-C230, C296-C363, C300-C366, and C311-C414. 2 CUB domains span residues 32 to 143 (CGGI…YSAA) and 153 to 267 (CGGR…YKFR). The NTR domain maps to 296–414 (CQQKCRRMGT…PMNALKNKQC (119 aa)). A glycan (N-linked (GlcNAc...) asparagine) is linked at N354.

Interacts with heparin with high affinity, and type I or II collagen. O-glycosylated; contains sialic acid.

Its subcellular location is the secreted. Functionally, binds to the C-terminal propeptide of types I and II procollagens and may enhance the cleavage of that propeptide by BMP1. This chain is Procollagen C-endopeptidase enhancer 2 (Pcolce2), found in Mus musculus (Mouse).